Consider the following 597-residue polypeptide: Large ribosomal subunit assembly factor BipA (597 aa).

The tr-type G domain occupies 3–198 (LPIRNVAIIA…AILHHVPPPA (196 aa)). Residues 15–20 (DHGKTT) and 128–131 (NKID) contribute to the GTP site.

It belongs to the TRAFAC class translation factor GTPase superfamily. Classic translation factor GTPase family. BipA subfamily. Monomer.

The protein resides in the cytoplasm. It catalyses the reaction GTP + H2O = GDP + phosphate + H(+). In terms of biological role, a 50S ribosomal subunit assembly protein with GTPase activity, required for 50S subunit assembly at low temperatures, may also play a role in translation. Binds GTP and analogs. Binds the 70S ribosome between the 30S and 50S subunits, in a similar position as ribosome-bound EF-G; it contacts a number of ribosomal proteins, both rRNAs and the A-site tRNA. The protein is Large ribosomal subunit assembly factor BipA of Synechocystis sp. (strain ATCC 27184 / PCC 6803 / Kazusa).